The following is a 357-amino-acid chain: Dynein axonemal assembly factor 10 (357 aa).

WD repeat units follow at residues 80-127, 132-170, 184-223, and 277-321; these read EFTN…IPIW, AHQG…NSAN, EQTN…IQST, and EPNQ…IDKV.

As to quaternary structure, interacts with PIH1D1; the interaction associates DNAAF10 with the R2TP complex. Interacts with several dynein axonemal assembly factors.

The protein localises to the dynein axonemal particle. Key assembly factor specifically required for the stability of axonemal dynein heavy chains in cytoplasm. The sequence is that of Dynein axonemal assembly factor 10 (dnaaf10) from Dictyostelium discoideum (Social amoeba).